Here is a 374-residue protein sequence, read N- to C-terminus: DNA-directed RNA polymerase subunit alpha (374 aa).

Positions 1–270 (MIFDEDSSSV…DQFQQFINFD (270 aa)) are alpha N-terminal domain (alpha-NTD). Residues 282–374 (KDVLPYDSNL…ESLSKQYSEE (93 aa)) form an alpha C-terminal domain (alpha-CTD) region.

Belongs to the RNA polymerase alpha chain family. In terms of assembly, homodimer. The RNAP catalytic core consists of 2 alpha, 1 beta, 1 beta' and 1 omega subunit. When a sigma factor is associated with the core the holoenzyme is formed, which can initiate transcription.

The catalysed reaction is RNA(n) + a ribonucleoside 5'-triphosphate = RNA(n+1) + diphosphate. Its function is as follows. DNA-dependent RNA polymerase catalyzes the transcription of DNA into RNA using the four ribonucleoside triphosphates as substrates. This is DNA-directed RNA polymerase subunit alpha from Ehrlichia ruminantium (strain Welgevonden).